The primary structure comprises 115 residues: MPKANNAVASRARRKRILKKAKGFWGSRGNILTVVKHAVDKAEQYAYRDRRAKKRTFRSLWIMRINAAARLNGTTYSKMVNAMSKKSIEIDRKTLAEIAVKDPAAFSQIVKAVIE.

It belongs to the bacterial ribosomal protein bL20 family.

Binds directly to 23S ribosomal RNA and is necessary for the in vitro assembly process of the 50S ribosomal subunit. It is not involved in the protein synthesizing functions of that subunit. The chain is Large ribosomal subunit protein bL20 from Chlorobium phaeobacteroides (strain DSM 266 / SMG 266 / 2430).